Here is a 69-residue protein sequence, read N- to C-terminus: MKNLLICIIKMYRKYISPLKRPSCRFYPTCSQYSIEAIEKYGALKGTLISIKRILKCHPFNEGGYDPVK.

It belongs to the UPF0161 family.

Its subcellular location is the cell membrane. Could be involved in insertion of integral membrane proteins into the membrane. This Clostridium botulinum (strain ATCC 19397 / Type A) protein is Putative membrane protein insertion efficiency factor.